A 394-amino-acid chain; its full sequence is Bone morphogenetic protein 2 (394 aa).

The first 19 residues, Met-1–Gly-19, serve as a signal peptide directing secretion. Residues Gly-20–Arg-280 constitute a propeptide, cleaved by PCSK5. Ser-86 bears the Phosphoserine mark. Residues Asn-134, Asn-162, and Asn-198 are each glycosylated (N-linked (GlcNAc...) asparagine). The tract at residues Gly-269–Lys-291 is disordered. A compositionally biased stretch (basic residues) spans His-272–Lys-291. Disulfide bonds link Cys-294–Cys-359, Cys-323–Cys-391, and Cys-327–Cys-393. Residue Asn-336 is glycosylated (N-linked (GlcNAc...) asparagine).

Belongs to the TGF-beta family. As to quaternary structure, homodimer; disulfide-linked. Interacts with SOSTDC1. Interacts with GREM2, RGMA, RGMB and RGMC. Interacts with ASPN. Interacts with MAFP5. Interacts with FBN1 (via N-terminal domain) and FBN2. Interacts with type I receptor BMPR1A. Interacts with type II receptor BMPR2. Interacts with SCUBE3. Interacts with TNFAIP6 (primarily via Link domain); this interaction is inhibited by hyaluronan. Interacts with ERFE. Interacts with BMPR1A/ALK3; the interaction may induce HAMP expression. Forms heterodimers with BMP6 in vitro; the heterodimer then binds to its receptor BMPR1A /ALK3 and may induce HAMP expression. Interacts with TGFBR3.

The protein resides in the secreted. Functionally, growth factor of the TGF-beta superfamily that plays essential roles in many developmental processes, including cardiogenesis, neurogenesis, and osteogenesis. Induces cartilage and bone formation. Initiates the canonical BMP signaling cascade by associating with type I receptor BMPR1A and type II receptor BMPR2. Once all three components are bound together in a complex at the cell surface, BMPR2 phosphorylates and activates BMPR1A. In turn, BMPR1A propagates signal by phosphorylating SMAD1/5/8 that travel to the nucleus and act as activators and repressors of transcription of target genes. Also acts to promote expression of HAMP, via the interaction with its receptor BMPR1A/ALK3. Can also signal through non-canonical pathways such as ERK/MAP kinase signaling cascade that regulates osteoblast differentiation. Also stimulates the differentiation of myoblasts into osteoblasts via the EIF2AK3-EIF2A-ATF4 pathway by stimulating EIF2A phosphorylation which leads to increased expression of ATF4 which plays a central role in osteoblast differentiation. Acts as a positive regulator of odontoblast differentiation during mesenchymal tooth germ formation, expression is repressed during the bell stage by MSX1-mediated inhibition of CTNNB1 signaling. The protein is Bone morphogenetic protein 2 (Bmp2) of Mus musculus (Mouse).